We begin with the raw amino-acid sequence, 130 residues long: Histone H2A type 1-F (130 aa).

Positions 1-22 are disordered; sequence MSGRGKQGGKARAKAKTRSSRA. Position 2 is a phosphoserine; by RPS6KA5 (Ser-2). Arg-4 is modified (citrulline; alternate). Arg-4 carries the post-translational modification Symmetric dimethylarginine; by PRMT5; alternate. 2 positions are modified to N6-(2-hydroxyisobutyryl)lysine: Lys-6 and Lys-10. Basic residues predominate over residues 7 to 19; sequence QGGKARAKAKTRS. Position 10 is an N6-lactoyllysine; alternate (Lys-10). At Lys-37 the chain carries N6-(2-hydroxyisobutyryl)lysine; alternate. At Lys-37 the chain carries N6-(beta-hydroxybutyryl)lysine; alternate. Lys-37 is subject to N6-crotonyllysine; alternate. 3 positions are modified to N6-(2-hydroxyisobutyryl)lysine: Lys-75, Lys-76, and Lys-96. Residue Lys-96 is modified to N6-glutaryllysine; alternate. N5-methylglutamine is present on Gln-105. The residue at position 119 (Lys-119) is an N6-(2-hydroxyisobutyryl)lysine; alternate. 2 positions are modified to N6-crotonyllysine; alternate: Lys-119 and Lys-120. N6-glutaryllysine; alternate occurs at positions 119 and 120. A Glycyl lysine isopeptide (Lys-Gly) (interchain with G-Cter in ubiquitin); alternate cross-link involves residue Lys-120. Thr-121 carries the post-translational modification Phosphothreonine; by DCAF1. The residue at position 126 (Lys-126) is an N6-crotonyllysine; alternate. At Lys-126 the chain carries N6-glutaryllysine; alternate.

The protein belongs to the histone H2A family. In terms of assembly, the nucleosome is a histone octamer containing two molecules each of H2A, H2B, H3 and H4 assembled in one H3-H4 heterotetramer and two H2A-H2B heterodimers. The octamer wraps approximately 147 bp of DNA. Post-translationally, deiminated on Arg-4 in granulocytes upon calcium entry. In terms of processing, monoubiquitination of Lys-120 (H2AK119Ub) by RING1, TRIM37 and RNF2/RING2 complex gives a specific tag for epigenetic transcriptional repression and participates in X chromosome inactivation of female mammals. It is involved in the initiation of both imprinted and random X inactivation. Ubiquitinated H2A is enriched in inactive X chromosome chromatin. Ubiquitination of H2A functions downstream of methylation of 'Lys-27' of histone H3 (H3K27me). H2AK119Ub by RNF2/RING2 can also be induced by ultraviolet and may be involved in DNA repair. Following DNA double-strand breaks (DSBs), it is ubiquitinated through 'Lys-63' linkage of ubiquitin moieties by the E2 ligase UBE2N and the E3 ligases RNF8 and RNF168, leading to the recruitment of repair proteins to sites of DNA damage. Ubiquitination at Lys-14 and Lys-16 (H2AK13Ub and H2AK15Ub, respectively) in response to DNA damage is initiated by RNF168 that mediates monoubiquitination at these 2 sites, and 'Lys-63'-linked ubiquitin are then conjugated to monoubiquitin; RNF8 is able to extend 'Lys-63'-linked ubiquitin chains in vitro. H2AK119Ub and ionizing radiation-induced 'Lys-63'-linked ubiquitination (H2AK13Ub and H2AK15Ub) are distinct events. Phosphorylation on Ser-2 (H2AS1ph) is enhanced during mitosis. Phosphorylation on Ser-2 by RPS6KA5/MSK1 directly represses transcription. Acetylation of H3 inhibits Ser-2 phosphorylation by RPS6KA5/MSK1. Phosphorylation at Thr-121 (H2AT120ph) by DCAF1 is present in the regulatory region of many tumor suppresor genes and down-regulates their transcription. Post-translationally, symmetric dimethylation on Arg-4 by the PRDM1/PRMT5 complex may play a crucial role in the germ-cell lineage. In terms of processing, glutamine methylation at Gln-105 (H2AQ104me) by FBL is specifically dedicated to polymerase I. It is present at 35S ribosomal DNA locus and impairs binding of the FACT complex. Crotonylation (Kcr) is specifically present in male germ cells and marks testis-specific genes in post-meiotic cells, including X-linked genes that escape sex chromosome inactivation in haploid cells. Crotonylation marks active promoters and enhancers and confers resistance to transcriptional repressors. It is also associated with post-meiotically activated genes on autosomes. Post-translationally, lactylated in macrophages by EP300/P300 by using lactoyl-CoA directly derived from endogenous or exogenous lactate, leading to stimulates gene transcription.

Its subcellular location is the nucleus. The protein localises to the chromosome. Its function is as follows. Core component of nucleosome. Nucleosomes wrap and compact DNA into chromatin, limiting DNA accessibility to the cellular machineries which require DNA as a template. Histones thereby play a central role in transcription regulation, DNA repair, DNA replication and chromosomal stability. DNA accessibility is regulated via a complex set of post-translational modifications of histones, also called histone code, and nucleosome remodeling. This Rattus norvegicus (Rat) protein is Histone H2A type 1-F.